A 256-amino-acid chain; its full sequence is MMKINLNADLGESFGAWKMGEDDALLQVVRSANIACGFHAGDPLVMRNTVRMALAAGVSLGAHPAYPDLQGFGRRPMKMAPAELEAAVIYQLGALAGIAAAEGGRLSHVKPHGALSNQACEDAELAATVVRAVRAFDRELILLAPALSELHAVGERAGLRVAAEIFADRAYTDAATLAARTQPGAVIHDHDEIIAHVLRMLDAGGIVAQSGKVMKTVMHSVCVHGDTPGAVQSARRLAETLAAKGWELVGLPEMGE.

Belongs to the LamB/PxpA family. Forms a complex composed of PxpA, PxpB and PxpC.

The catalysed reaction is 5-oxo-L-proline + ATP + 2 H2O = L-glutamate + ADP + phosphate + H(+). Functionally, catalyzes the cleavage of 5-oxoproline to form L-glutamate coupled to the hydrolysis of ATP to ADP and inorganic phosphate. This is 5-oxoprolinase subunit A from Azoarcus sp. (strain BH72).